A 358-amino-acid polypeptide reads, in one-letter code: S-adenosylmethionine:tRNA ribosyltransferase-isomerase (358 aa).

The protein belongs to the QueA family. In terms of assembly, monomer.

Its subcellular location is the cytoplasm. The catalysed reaction is 7-aminomethyl-7-carbaguanosine(34) in tRNA + S-adenosyl-L-methionine = epoxyqueuosine(34) in tRNA + adenine + L-methionine + 2 H(+). Its pathway is tRNA modification; tRNA-queuosine biosynthesis. Functionally, transfers and isomerizes the ribose moiety from AdoMet to the 7-aminomethyl group of 7-deazaguanine (preQ1-tRNA) to give epoxyqueuosine (oQ-tRNA). This is S-adenosylmethionine:tRNA ribosyltransferase-isomerase from Desulfotalea psychrophila (strain LSv54 / DSM 12343).